The primary structure comprises 35 residues: Photosystem II reaction center protein M (35 aa).

The chain crosses the membrane as a helical span at residues 5–25; that stretch reads ILAFIATALFILVPTAFLLII.

It belongs to the PsbM family. As to quaternary structure, PSII is composed of 1 copy each of membrane proteins PsbA, PsbB, PsbC, PsbD, PsbE, PsbF, PsbH, PsbI, PsbJ, PsbK, PsbL, PsbM, PsbT, PsbX, PsbY, PsbZ, Psb30/Ycf12, at least 3 peripheral proteins of the oxygen-evolving complex and a large number of cofactors. It forms dimeric complexes.

The protein localises to the plastid. It is found in the chloroplast thylakoid membrane. Functionally, one of the components of the core complex of photosystem II (PSII). PSII is a light-driven water:plastoquinone oxidoreductase that uses light energy to abstract electrons from H(2)O, generating O(2) and a proton gradient subsequently used for ATP formation. It consists of a core antenna complex that captures photons, and an electron transfer chain that converts photonic excitation into a charge separation. This subunit is found at the monomer-monomer interface. This is Photosystem II reaction center protein M from Panax quinquefolius (American ginseng).